Consider the following 1448-residue polypeptide: MGARASVLTGGKLDQWEKIYLRPGGKKKYMMKHLVWASRELERFACNPGLMDTAEGCAQLLRQLEPALKTGSEGLRSLFNTLAVLYCVHNNIKVQNTQEALEKLREKMKAEQKEPEPEQAAGAAAAPESSISRNYPLVQNAQGQMVHQPLSPRTLNAWVKVVEEKAFNPEVIPMFMALSEGATPQDLNTMLNTVGGHQAAMQMLKEVINEEAAEWDRGHPVHMGPIPPGQVREPRGSDIAGTTSTLAEQVAWMTANPPVPVGDIYRRWIVLGLNKIVRMYSPASILDIKQGPKETFRDYVDRFYKTLRAEQATQEVKNWMTETLLVQNANPDCKNILRALGPGASLEEMMTACQGVGGPAHKARVLAEAMTQAQTATSVFMQRGNFKGIRKTIKCFNCGKEGHLARNCKAPRKKGCWKCGQEGHQMKDCRSGERQFFREGLASLQREARKFPPDNNKERANSPSNRELWVSGGEDHTGDREGRKGEDRELSVPTLNFPQITLWQRPILTVKIGGEIKEALLDTGADDTVIEEIQLEGKWKPKMIGGIGGFIKVKQYDNVIIEIQGKKAVGTVLVGPTPVNIIGRNFLTQIGCTLNFPISPIETIPVKLKPGMDGPRVKQWPLTEEKIKALTEICTEMEKEGKISRIGPENPYNTPIFAIKKKDSTKWRKLVDFRELNKRTQDFWEVQLGIPHPAGLKKKKSVTVLDVGDAYFSCPLDENFRKYTAFTIPSVNNETPGIRYQYNVLPQGWKGSPAIFQSTMTKILEPFRKNNPELVIYQYMDDLYVGSDLEITQHREAVERLRSHLLTWGFTTPDKKHQKEPPFLWMGYELHPDKWTVQTIQLPEKDTWTVNDIQQLVGKLNWASQIYPGIKVKQLCKLIRGAKALTEVVTLTREAELELAENREILKEPVHGAYYNPDKELIAEIQKQGQGQWTYQIYQDLHKNLKTGKYAKMRSTHTNDIRQLTEVVQKVALESIVIWGKTPKFRLPVQKEVWETWWTEYWQATWIPDWEFVNTPPLVKLWYQLETEPISGAETYYVDGAANRETKLGKAGFVTDRGRQKVTSISETTNQQAELQAVLMALQDAGQEVNIVTDSQYVLGIIHSQPDKSESELVNQIIEELIKKERIYLSWVPAHKGIGGNEQIDKLVSTGIRKVLFLDGIDKAQEEHERYHSNWKAMASDFNLPPIVAKEIVASCDKCQLKGEAIHGQINCSPGVWQLDCTHLEGKIILVAVHVASGYLEAEVIPAETGQETAYFILKLAGRWPVKVIHTDNGSNFTSATVKAACWWANIQQEFGIPYNPQSQGAVESMNKELKKIIGQIRDQAEHLKTAVQMAVFIHNFKRKGGIGGYTAGERIIDIIATDIQTTKLQTQILKVQNFRVYYRDSREPTWKGPAKLLWKGEGAVVIQDNGDIKVVPRRKAKIIRDYGKQMAGDGCVASGQDESQDME.

Residue Gly-2 is the site of N-myristoyl glycine; by host attachment. Positions Trp-16–Arg-22 match the Nuclear export signal motif. A Nuclear localization signal motif is present at residues Lys-26 to Lys-32. The span at Lys-107–Glu-116 shows a compositional bias: basic and acidic residues. The interval Lys-107–Ser-129 is disordered. Residues Glu-118–Glu-128 are compositionally biased toward low complexity. Tyr-135 bears the Phosphotyrosine; by host mark. CCHC-type zinc fingers lie at residues Ile-393–Ala-410 and Lys-414–Ser-431. 2 stretches are compositionally biased toward basic and acidic residues: residues Arg-446–Ala-460 and Gly-473–Leu-490. A disordered region spans residues Arg-446–Leu-490. In terms of domain architecture, Peptidase A2 spans Lys-517–Phe-586. Residue Asp-522 is the For protease activity; shared with dimeric partner of the active site. Positions Glu-640–Leu-830 constitute a Reverse transcriptase domain. Residues Asp-706, Asp-781, and Asp-782 each coordinate Mg(2+). Residues Phe-823–His-831 are RT 'primer grip'. A Tryptophan repeat motif motif is present at residues Trp-994–Trp-1010. The RNase H type-1 domain occupies Ile-1030–Arg-1153. 4 residues coordinate Mg(2+): Asp-1039, Glu-1074, Asp-1094, and Asp-1145. The Integrase-type zinc finger occupies Asp-1159–Gln-1200. Positions 1168, 1172, 1196, and 1199 each coordinate Zn(2+). The 151-residue stretch at Ile-1210 to Ile-1360 folds into the Integrase catalytic domain. Residues Asp-1220 and Asp-1272 each coordinate Mg(2+). A DNA-binding region (integrase-type) is located at residues Phe-1379–Asp-1426.

As to quaternary structure, homotrimer. Interacts with gp41 (via C-terminus). In terms of assembly, homodimer. The active site consists of two apposed aspartic acid residues. Heterodimer of p66 RT and p51 RT (RT p66/p51). Heterodimerization of RT is essential for DNA polymerase activity. Despite the sequence identities, p66 RT and p51 RT have distinct folding. As to quaternary structure, homotetramer; may further associate as a homohexadecamer. It depends on Mg(2+) as a cofactor. In terms of processing, specific enzymatic cleavages by the viral protease yield mature proteins. The protease is released by autocatalytic cleavage. The polyprotein is cleaved during and after budding, this process is termed maturation. Proteolytic cleavage of p66 RT removes the RNase H domain to yield the p51 RT subunit. Post-translationally, capsid protein p24 is phosphorylated.

The protein localises to the virion. It localises to the host nucleus. Its subcellular location is the host cytoplasm. It is found in the host cell membrane. It catalyses the reaction Specific for a P1 residue that is hydrophobic, and P1' variable, but often Pro.. The catalysed reaction is Endohydrolysis of RNA in RNA/DNA hybrids. Three different cleavage modes: 1. sequence-specific internal cleavage of RNA. Human immunodeficiency virus type 1 and Moloney murine leukemia virus enzymes prefer to cleave the RNA strand one nucleotide away from the RNA-DNA junction. 2. RNA 5'-end directed cleavage 13-19 nucleotides from the RNA end. 3. DNA 3'-end directed cleavage 15-20 nucleotides away from the primer terminus.. The enzyme catalyses 3'-end directed exonucleolytic cleavage of viral RNA-DNA hybrid.. It carries out the reaction DNA(n) + a 2'-deoxyribonucleoside 5'-triphosphate = DNA(n+1) + diphosphate. The viral protease is inhibited by many synthetic protease inhibitors (PIs), such as amprenavir, atazanavir, indinavir, loprinavir, nelfinavir, ritonavir and saquinavir. RT can be inhibited either by nucleoside RT inhibitors (NRTIs) or by non nucleoside RT inhibitors (NNRTIs). NRTIs act as chain terminators, whereas NNRTIs inhibit DNA polymerization by binding a small hydrophobic pocket near the RT active site and inducing an allosteric change in this region. Classical NRTIs are abacavir, adefovir (PMEA), didanosine (ddI), lamivudine (3TC), stavudine (d4T), tenofovir (PMPA), zalcitabine (ddC), and zidovudine (AZT). Classical NNRTIs are atevirdine (BHAP U-87201E), delavirdine, efavirenz (DMP-266), emivirine (I-EBU), and nevirapine (BI-RG-587). The tritherapies used as a basic effective treatment of AIDS associate two NRTIs and one NNRTI. Use of protease inhibitors in tritherapy regimens permit more ambitious therapeutic strategies. Functionally, gag-Pol polyprotein and Gag polyprotein may regulate their own translation, by the binding genomic RNA in the 5'-UTR. At low concentration, Gag-Pol and Gag would promote translation, whereas at high concentration, the polyproteins encapsidate genomic RNA and then shut off translation. In terms of biological role, matrix protein p17 has two main functions: in infected cell, it targets Gag and Gag-pol polyproteins to the plasma membrane via a multipartite membrane-binding signal, that includes its myristointegration complex. The myristoylation signal and the NLS exert conflicting influences its subcellular localization. The key regulation of these motifs might be phosphorylation of a portion of MA molecules on the C-terminal tyrosine at the time of virus maturation, by virion-associated cellular tyrosine kinase. Implicated in the release from host cell mediated by Vpu. Capsid protein p24 forms the conical core that encapsulates the genomic RNA-nucleocapsid complex in the virion. The core is constituted by capsid protein hexamer subunits. The core is disassembled soon after virion entry. Interaction with host PPIA/CYPA protects the virus from restriction by host TRIM5-alpha and from an unknown antiviral activity in host cells. This capsid restriction by TRIM5 is one of the factors which restricts SIV to the simian species. Its function is as follows. Nucleocapsid protein p7 encapsulates and protects viral dimeric unspliced (genomic) RNA. Binds these RNAs through its zinc fingers. Facilitates rearangement of nucleic acid secondary structure during retrotranscription of genomic RNA. This capability is referred to as nucleic acid chaperone activity. Functionally, the aspartyl protease mediates proteolytic cleavages of Gag and Gag-Pol polyproteins during or shortly after the release of the virion from the plasma membrane. Cleavages take place as an ordered, step-wise cascade to yield mature proteins. This process is called maturation. Displays maximal activity during the budding process just prior to particle release from the cell. Also cleaves Nef and Vif, probably concomitantly with viral structural proteins on maturation of virus particles. Hydrolyzes host EIF4GI and PABP1 in order to shut off the capped cellular mRNA translation. The resulting inhibition of cellular protein synthesis serves to ensure maximal viral gene expression and to evade host immune response. In terms of biological role, reverse transcriptase/ribonuclease H (RT) is a multifunctional enzyme that converts the viral dimeric RNA genome into dsDNA in the cytoplasm, shortly after virus entry into the cell. This enzyme displays a DNA polymerase activity that can copy either DNA or RNA templates, and a ribonuclease H (RNase H) activity that cleaves the RNA strand of RNA-DNA heteroduplexes in a partially processive 3' to 5' endonucleasic mode. Conversion of viral genomic RNA into dsDNA requires many steps. A tRNA binds to the primer-binding site (PBS) situated at the 5'-end of the viral RNA. RT uses the 3' end of the tRNA primer to perform a short round of RNA-dependent minus-strand DNA synthesis. The reading proceeds through the U5 region and ends after the repeated (R) region which is present at both ends of viral RNA. The portion of the RNA-DNA heteroduplex is digested by the RNase H, resulting in a ssDNA product attached to the tRNA primer. This ssDNA/tRNA hybridizes with the identical R region situated at the 3' end of viral RNA. This template exchange, known as minus-strand DNA strong stop transfer, can be either intra- or intermolecular. RT uses the 3' end of this newly synthesized short ssDNA to perform the RNA-dependent minus-strand DNA synthesis of the whole template. RNase H digests the RNA template except for two polypurine tracts (PPTs) situated at the 5'-end and near the center of the genome. It is not clear if both polymerase and RNase H activities are simultaneous. RNase H can probably proceed both in a polymerase-dependent (RNA cut into small fragments by the same RT performing DNA synthesis) and a polymerase-independent mode (cleavage of remaining RNA fragments by free RTs). Secondly, RT performs DNA-directed plus-strand DNA synthesis using the PPTs that have not been removed by RNase H as primers. PPTs and tRNA primers are then removed by RNase H. The 3' and 5' ssDNA PBS regions hybridize to form a circular dsDNA intermediate. Strand displacement synthesis by RT to the PBS and PPT ends produces a blunt ended, linear dsDNA copy of the viral genome that includes long terminal repeats (LTRs) at both ends. Integrase catalyzes viral DNA integration into the host chromosome, by performing a series of DNA cutting and joining reactions. This enzyme activity takes place after virion entry into a cell and reverse transcription of the RNA genome in dsDNA. The first step in the integration process is 3' processing. This step requires a complex comprising the viral genome, matrix protein, Vpr and integrase. This complex is called the pre-integration complex (PIC). The integrase protein removes 2 nucleotides from each 3' end of the viral DNA, leaving recessed CA OH's at the 3' ends. In the second step, the PIC enters cell nucleus. This process is mediated through integrase and Vpr proteins, and allows the virus to infect a non dividing cell. This ability to enter the nucleus is specific of lentiviruses, other retroviruses cannot and rely on cell division to access cell chromosomes. In the third step, termed strand transfer, the integrase protein joins the previously processed 3' ends to the 5' ends of strands of target cellular DNA at the site of integration. The 5'-ends are produced by integrase-catalyzed staggered cuts, 5 bp apart. A Y-shaped, gapped, recombination intermediate results, with the 5'-ends of the viral DNA strands and the 3' ends of target DNA strands remaining unjoined, flanking a gap of 5 bp. The last step is viral DNA integration into host chromosome. This involves host DNA repair synthesis in which the 5 bp gaps between the unjoined strands are filled in and then ligated. Since this process occurs at both cuts flanking the SIV genome, a 5 bp duplication of host DNA is produced at the ends of SIV integration. Alternatively, Integrase may catalyze the excision of viral DNA just after strand transfer, this is termed disintegration. This Pan troglodytes (Chimpanzee) protein is Gag-Pol polyprotein (gag-pol).